The chain runs to 103 residues: Large ribosomal subunit protein bL21 (103 aa).

Belongs to the bacterial ribosomal protein bL21 family. As to quaternary structure, part of the 50S ribosomal subunit. Contacts protein L20.

This protein binds to 23S rRNA in the presence of protein L20. The sequence is that of Large ribosomal subunit protein bL21 from Burkholderia mallei (strain NCTC 10247).